The primary structure comprises 1009 residues: Ulvan lyase, long isoform (1009 aa).

An N-terminal signal peptide occupies residues 1–32 (MTAQKSKYFNRIMTMNTLLFSLLTVGFSQAYA). 137–138 (SH) lines the substrate pocket. His-138 serves as the catalytic Proton donor/acceptor. Ca(2+) is bound by residues Asp-200, Asp-210, and Lys-212. Positions 291 and 308 each coordinate substrate. Ca(2+) contacts are provided by Asp-311, Asp-314, and Tyr-316. Position 372 (Tyr-372) interacts with substrate.

It belongs to the polysaccharide lyase 24 family.

In terms of biological role, ulvan lyase involved in ulvan degradation. Ulvan is the main polysaccharide component of the Ulvales (green seaweed) cell wall. It is composed of disaccharide building blocks comprising 3-sulfated rhamnose (Rha3S) linked to D-glucuronic acid (GlcA), L-iduronic acid (IduA), or D-xylose (Xyl). Ulvan lyase catalyzes preferentially the endolytic cleavage of the glycosidic bond between Rha3S and the uronic acid GlcA, but not IduA, producing oligosaccharides that have unsaturated 4-deoxy-L-threo-hex-4-enopyranosiduronic acid (deltaUA) at the non-reducing end. The most abundant end products in the degradation of the ulvan polysaccharide were deltaUA-Rha3S disaccharides and deltaUA-Rha3S-IduA-Rha3S and deltaUA-Rha3S-Xyl-Rha3S tetrasaccharides. The chain is Ulvan lyase, long isoform (ullA) from Glaciecola sp. (strain KUL10).